We begin with the raw amino-acid sequence, 378 residues long: Carbazole 1,9a-dioxygenase, terminal oxygenase component CarAa (378 aa).

Positions 29–135 constitute a Rieske domain; sequence WYPVRLASEI…VEEAKGLIFV (107 aa). C69, H71, C90, and H93 together coordinate [2Fe-2S] cluster.

In terms of assembly, homotrimer. Carbazole 1,9a-dioxygenase complex consists of a terminal oxygenase component CarAa, a ferredoxin reductase component fdr and a ferredoxin component CarAc. Requires [2Fe-2S] cluster as cofactor.

It catalyses the reaction 9H-carbazole + NADH + O2 + H(+) = 2'-aminobiphenyl-2,3-diol + NAD(+). The enzyme catalyses 9H-carbazole + NADPH + O2 + H(+) = 2'-aminobiphenyl-2,3-diol + NADP(+). Functionally, part of the multicomponent carbazole 1,9a-dioxygenase (CARDO), that converts carbazole (CAR) into 2-aminobiphenyl-2,3-diol. Catalyzes the dioxygenation at the angular (C-9a) and adjacent (C-1) positions of carbazole to yield a highly unstable cis-hydrodiol intermediate which is spontaneously converted to 2-aminobiphenyl-2,3-diol. This is Carbazole 1,9a-dioxygenase, terminal oxygenase component CarAa (carAa) from Sphingomonas sp.